Here is a 163-residue protein sequence, read N- to C-terminus: MLQHHWNKPDLEARFPVNSVVRYSGGGLKRILGMSGVVTGHSHTGLVKVRFGTQYAEVLPNNLIPLPKADVKTPNVEAPKTEVKSDVTHPNHYMLFDNVEAIEVIARSMTVEAFRGYCLGNILKYRLRAGKKSELATMDKDLKKAAFYQELFDKHRGLCYDAS.

The function of this late gene protein is unknown. This chain is Gene 1.7 protein (1.7), found in Escherichia coli (Bacteriophage T3).